Reading from the N-terminus, the 443-residue chain is SAM50-like protein CG7639 (443 aa).

In terms of domain architecture, POTRA spans 23-101 (ARVDRVNVSG…QGYEVTFKGN (79 aa)).

This sequence belongs to the SAM50/omp85 family. As to quaternary structure, associates with the mitochondrial contact site and cristae organizing system (MICOS) complex (also known as MINOS or MitOS complex).

The protein localises to the mitochondrion outer membrane. Functionally, may play a role in the maintenance of the structure of mitochondrial cristae. The polypeptide is SAM50-like protein CG7639 (Drosophila melanogaster (Fruit fly)).